The chain runs to 729 residues: Transketolase (729 aa).

Residue histidine 97 participates in substrate binding. Thiamine diphosphate is bound by residues histidine 138 and 186–188 (GPL). Aspartate 227 contacts Mg(2+). Thiamine diphosphate contacts are provided by glycine 228 and asparagine 257. 2 residues coordinate Mg(2+): asparagine 257 and isoleucine 259. Residues histidine 332, arginine 423, and serine 450 each contribute to the substrate site. Histidine 332 contacts thiamine diphosphate. Residue glutamate 477 is the Proton donor of the active site. Thiamine diphosphate is bound at residue phenylalanine 503. Substrate is bound by residues histidine 527, aspartate 535, and arginine 586.

Belongs to the transketolase family. Homodimer. Requires Mg(2+) as cofactor. Ca(2+) serves as cofactor. It depends on Mn(2+) as a cofactor. The cofactor is Co(2+). Thiamine diphosphate is required as a cofactor.

The catalysed reaction is D-sedoheptulose 7-phosphate + D-glyceraldehyde 3-phosphate = aldehydo-D-ribose 5-phosphate + D-xylulose 5-phosphate. Its function is as follows. Catalyzes the transfer of a two-carbon ketol group from a ketose donor to an aldose acceptor, via a covalent intermediate with the cofactor thiamine pyrophosphate. This Streptococcus pyogenes serotype M18 (strain MGAS8232) protein is Transketolase (tkt).